A 486-amino-acid chain; its full sequence is N-succinylglutamate 5-semialdehyde dehydrogenase (486 aa).

Gly220–Gly225 is a binding site for NAD(+). Catalysis depends on residues Glu243 and Cys277.

This sequence belongs to the aldehyde dehydrogenase family. AstD subfamily.

It carries out the reaction N-succinyl-L-glutamate 5-semialdehyde + NAD(+) + H2O = N-succinyl-L-glutamate + NADH + 2 H(+). Its pathway is amino-acid degradation; L-arginine degradation via AST pathway; L-glutamate and succinate from L-arginine: step 4/5. Functionally, catalyzes the NAD-dependent reduction of succinylglutamate semialdehyde into succinylglutamate. This Shewanella baltica (strain OS185) protein is N-succinylglutamate 5-semialdehyde dehydrogenase.